The following is an 83-amino-acid chain: MAVKIRLARMGAKKKPFYRIVVSDSESPRDGRFLEIVGNYDPGKDPAEVNVKESRLLEWLSKGAKPTLTVSQLLQKKGIKVGA.

This sequence belongs to the bacterial ribosomal protein bS16 family.

The chain is Small ribosomal subunit protein bS16 from Syntrophus aciditrophicus (strain SB).